We begin with the raw amino-acid sequence, 298 residues long: MAVSARDYWDLTKPKVVALIVFTALVGMFLAIPDMPTWLQVRTGALGFLGIWLAASAAAAINQLLDAKIDAQMARTSWRPLVVGKVRPWQVLVFAGALIVISMTILVVWVNVITAVLTFASLIGYAVIYTVYLKRATSQNIVIGGLAGATPPMLGWAAVTGLPTSADWINASLLVLIIFIWTPPHFWALAIFRRADYAKAAIPMLPVTHGVPHTRKQILVYTVLLAIVTLAPVAVGMSGVFYLGGAIVLNAVFLWYAWRMLNPPDELFSMKMFGYSIVYLMALFAFLMVDHLLLPWVR.

The next 9 helical transmembrane spans lie at 16 to 36 (VVAL…PDMP), 45 to 65 (ALGF…NQLL), 93 to 113 (VFAG…VNVI), 114 to 134 (TAVL…VYLK), 141 to 161 (IVIG…AVTG), 172 to 192 (SLLV…LAIF), 223 to 243 (VLLA…VFYL), 244 to 264 (GGAI…LNPP), and 277 to 297 (IVYL…LPWV).

It belongs to the UbiA prenyltransferase family. Protoheme IX farnesyltransferase subfamily.

The protein localises to the cell inner membrane. The catalysed reaction is heme b + (2E,6E)-farnesyl diphosphate + H2O = Fe(II)-heme o + diphosphate. It participates in porphyrin-containing compound metabolism; heme O biosynthesis; heme O from protoheme: step 1/1. Its function is as follows. Converts heme B (protoheme IX) to heme O by substitution of the vinyl group on carbon 2 of heme B porphyrin ring with a hydroxyethyl farnesyl side group. The protein is Protoheme IX farnesyltransferase of Xanthomonas euvesicatoria pv. vesicatoria (strain 85-10) (Xanthomonas campestris pv. vesicatoria).